The following is a 61-amino-acid chain: UPF0312 protein (61 aa).

The protein belongs to the UPF0312 family.

The chain is UPF0312 protein from Delftia acidovorans (Pseudomonas acidovorans).